Reading from the N-terminus, the 196-residue chain is Protease (196 aa).

Residues His54, Asp70, and Cys121 contribute to the active site.

The protein belongs to the peptidase C5 family. In terms of assembly, interacts with protease cofactor pVI-C; this interaction is necessary for protease activation.

It localises to the virion. The protein localises to the host nucleus. The enzyme catalyses Cleaves proteins of the adenovirus and its host cell at two consensus sites: -Yaa-Xaa-Gly-Gly-|-Xaa- and -Yaa-Xaa-Gly-Xaa-|-Gly- (in which Yaa is Met, Ile or Leu, and Xaa is any amino acid).. With respect to regulation, requires DNA and protease cofactor for maximal activation. Inside nascent virions, becomes partially activated by binding to the viral DNA, allowing it to cleave the cofactor that binds to the protease and fully activates it. Actin, like the viral protease cofactor, seems to act as a cofactor in the cleavage of cytokeratin 18 and of actin itself. Cleaves viral precursor proteins (pTP, pIIIa, pVI, pVII, pVIII, and pX) inside newly assembled particles giving rise to mature virions. Protease complexed to its cofactor slides along the viral DNA to specifically locate and cleave the viral precursors. Mature virions have a weakened organization compared to the unmature virions, thereby facilitating subsequent uncoating. Without maturation, the particle lacks infectivity and is unable to uncoat. Late in adenovirus infection, in the cytoplasm, may participate in the cytoskeleton destruction. Cleaves host cell cytoskeletal keratins K7 and K18. The polypeptide is Protease (Bos taurus (Bovine)).